We begin with the raw amino-acid sequence, 700 residues long: Probable pre-mRNA-splicing factor ATP-dependent RNA helicase DEAH4 (700 aa).

The residue at position 2 (Ala2) is an N-acetylalanine. One can recognise a Helicase ATP-binding domain in the interval 14-178 (VETVEKNSVV…FSGCPVLNVP (165 aa)). 27-34 (GETGSGKS) contacts ATP. Residues 124-127 (DEAH) carry the DEAH box motif. Positions 200–377 (SLKVAIDIHV…GSVLYLKSLD (178 aa)) constitute a Helicase C-terminal domain. 2 disordered regions span residues 463-486 (PARSKPSEKKRKHDEDSNLPNGSG) and 654-682 (GPAPSFKVPEEKTELSKNNAETPAVSENV).

It belongs to the DEAD box helicase family. DEAH subfamily. PRP22 sub-subfamily.

The catalysed reaction is ATP + H2O = ADP + phosphate + H(+). Functionally, may be involved in pre-mRNA splicing. This is Probable pre-mRNA-splicing factor ATP-dependent RNA helicase DEAH4 from Arabidopsis thaliana (Mouse-ear cress).